The following is a 287-amino-acid chain: Formamidopyrimidine-DNA glycosylase (287 aa).

Proline 2 acts as the Schiff-base intermediate with DNA in catalysis. Residue glutamate 3 is the Proton donor of the active site. The active-site Proton donor; for beta-elimination activity is lysine 61. DNA is bound by residues histidine 95, arginine 115, and arginine 157. Residues asparagine 243–proline 277 form an FPG-type zinc finger. Residue arginine 267 is the Proton donor; for delta-elimination activity of the active site.

The protein belongs to the FPG family. Monomer. Zn(2+) is required as a cofactor.

It carries out the reaction Hydrolysis of DNA containing ring-opened 7-methylguanine residues, releasing 2,6-diamino-4-hydroxy-5-(N-methyl)formamidopyrimidine.. The enzyme catalyses 2'-deoxyribonucleotide-(2'-deoxyribose 5'-phosphate)-2'-deoxyribonucleotide-DNA = a 3'-end 2'-deoxyribonucleotide-(2,3-dehydro-2,3-deoxyribose 5'-phosphate)-DNA + a 5'-end 5'-phospho-2'-deoxyribonucleoside-DNA + H(+). In terms of biological role, involved in base excision repair of DNA damaged by oxidation or by mutagenic agents. Acts as a DNA glycosylase that recognizes and removes damaged bases. Has a preference for oxidized purines, such as 7,8-dihydro-8-oxoguanine (8-oxoG). Has AP (apurinic/apyrimidinic) lyase activity and introduces nicks in the DNA strand. Cleaves the DNA backbone by beta-delta elimination to generate a single-strand break at the site of the removed base with both 3'- and 5'-phosphates. The chain is Formamidopyrimidine-DNA glycosylase from Salinispora tropica (strain ATCC BAA-916 / DSM 44818 / JCM 13857 / NBRC 105044 / CNB-440).